The sequence spans 528 residues: DnaJ homolog 1, mitochondrial (528 aa).

Residues 1-66 (MFSKYLQSRV…REFSRCAALK (66 aa)) constitute a mitochondrion transit peptide. In terms of domain architecture, J spans 86–150 (DPYKTLGVSK…KKKKAFDTYG (65 aa)). The CR-type zinc-finger motif lies at 227–308 (GAKKDLSYSV…CMGSGTVRER (82 aa)). CXXCXGXG motif repeat units lie at residues 240-247 (CSSCHGSG), 257-264 (CFACKGTG), 280-287 (CDSCGGTG), and 296-303 (CRSCMGSG). The interval 455-528 (NDSTARRTQS…QNPKKDESSS (74 aa)) is disordered. Residues 462–488 (TQSSPSGTNSSTSTSSTSSKHSTGIST) show a composition bias toward low complexity. Over residues 513–528 (LHPDEDQNPKKDESSS) the composition is skewed to basic and acidic residues.

It localises to the mitochondrion. The sequence is that of DnaJ homolog 1, mitochondrial (mdj1) from Schizosaccharomyces pombe (strain 972 / ATCC 24843) (Fission yeast).